Reading from the N-terminus, the 176-residue chain is ATP synthase subunit b (176 aa).

The helical transmembrane segment at 18 to 38 (FGLDATVWVSIAMLVFLGILV) threads the bilayer.

The protein belongs to the ATPase B chain family. In terms of assembly, F-type ATPases have 2 components, F(1) - the catalytic core - and F(0) - the membrane proton channel. F(1) has five subunits: alpha(3), beta(3), gamma(1), delta(1), epsilon(1). F(0) has three main subunits: a(1), b(2) and c(10-14). The alpha and beta chains form an alternating ring which encloses part of the gamma chain. F(1) is attached to F(0) by a central stalk formed by the gamma and epsilon chains, while a peripheral stalk is formed by the delta and b chains.

The protein localises to the cell inner membrane. F(1)F(0) ATP synthase produces ATP from ADP in the presence of a proton or sodium gradient. F-type ATPases consist of two structural domains, F(1) containing the extramembraneous catalytic core and F(0) containing the membrane proton channel, linked together by a central stalk and a peripheral stalk. During catalysis, ATP synthesis in the catalytic domain of F(1) is coupled via a rotary mechanism of the central stalk subunits to proton translocation. In terms of biological role, component of the F(0) channel, it forms part of the peripheral stalk, linking F(1) to F(0). This is ATP synthase subunit b from Sphingopyxis alaskensis (strain DSM 13593 / LMG 18877 / RB2256) (Sphingomonas alaskensis).